Reading from the N-terminus, the 368-residue chain is Probable dual-specificity RNA methyltransferase RlmN (368 aa).

Glu109 (proton acceptor) is an active-site residue. One can recognise a Radical SAM core domain in the interval 115-355 (YPDRVTMCIS…VTVRDTRGQE (241 aa)). Cysteines 122 and 360 form a disulfide. The [4Fe-4S] cluster site is built by Cys129, Cys133, and Cys136. S-adenosyl-L-methionine contacts are provided by residues 184–185 (GE), Ser218, 241–243 (SLH), and Asn317. Cys360 functions as the S-methylcysteine intermediate in the catalytic mechanism.

It belongs to the radical SAM superfamily. RlmN family. [4Fe-4S] cluster serves as cofactor.

It is found in the cytoplasm. The catalysed reaction is adenosine(2503) in 23S rRNA + 2 reduced [2Fe-2S]-[ferredoxin] + 2 S-adenosyl-L-methionine = 2-methyladenosine(2503) in 23S rRNA + 5'-deoxyadenosine + L-methionine + 2 oxidized [2Fe-2S]-[ferredoxin] + S-adenosyl-L-homocysteine. It catalyses the reaction adenosine(37) in tRNA + 2 reduced [2Fe-2S]-[ferredoxin] + 2 S-adenosyl-L-methionine = 2-methyladenosine(37) in tRNA + 5'-deoxyadenosine + L-methionine + 2 oxidized [2Fe-2S]-[ferredoxin] + S-adenosyl-L-homocysteine. Functionally, specifically methylates position 2 of adenine 2503 in 23S rRNA and position 2 of adenine 37 in tRNAs. This is Probable dual-specificity RNA methyltransferase RlmN from Streptomyces griseus subsp. griseus (strain JCM 4626 / CBS 651.72 / NBRC 13350 / KCC S-0626 / ISP 5235).